We begin with the raw amino-acid sequence, 335 residues long: Gibberellin 2-beta-dioxygenase 3 (335 aa).

Residues Glu175–Pro278 form the Fe2OG dioxygenase domain. Positions 202, 204, and 259 each coordinate Fe cation. Arg269 is a catalytic residue.

This sequence belongs to the iron/ascorbate-dependent oxidoreductase family. GA2OX subfamily. Fe(2+) serves as cofactor. In terms of tissue distribution, not expressed in the apex.

It catalyses the reaction gibberellin A1 + 2-oxoglutarate + O2 = gibberellin A8 + succinate + CO2. It participates in plant hormone biosynthesis; gibberellin biosynthesis. Catalyzes the 2-beta-hydroxylation of several biologically active gibberellins, leading to the homeostatic regulation of their endogenous level. Catabolism of gibberellins (GAs) plays a central role in plant development. Converts GA9/GA20 to GA51/GA29 and GA4/GA1 to GA34/GA8. The chain is Gibberellin 2-beta-dioxygenase 3 (GA2OX3) from Arabidopsis thaliana (Mouse-ear cress).